Reading from the N-terminus, the 421-residue chain is Isocitrate dehydrogenase [NADP], mitochondrial (421 aa).

The transit peptide at 1-8 directs the protein to the mitochondrion; it reads ARAAARHY. Residues Lys-14, Lys-17, Lys-36, and Lys-38 each carry the N6-acetyllysine modification. N6-acetyllysine; alternate is present on residues Lys-49 and Lys-75. An N6-succinyllysine; alternate mark is found at Lys-49 and Lys-75. Residues 84–86 and Arg-91 contribute to the NADP(+) site; that span reads TIT. Residue Thr-86 participates in D-threo-isocitrate binding. Residues 103–109 and Arg-118 contribute to the D-threo-isocitrate site; that span reads SPNGTIR. Residue Lys-124 is modified to N6-acetyllysine. N6-acetyllysine; alternate is present on Lys-135. Residue Lys-135 is modified to N6-succinyllysine; alternate. Residue Arg-141 participates in D-threo-isocitrate binding. N6-acetyllysine; alternate is present on residues Lys-149 and Lys-162. N6-succinyllysine; alternate is present on residues Lys-149 and Lys-162. Lys-168 carries the N6-acetyllysine modification. Lys-225 carries the post-translational modification N6-acetyllysine; alternate. The residue at position 225 (Lys-225) is an N6-succinyllysine; alternate. An N6-acetyllysine mark is found at Lys-232, Lys-241, Lys-244, and Lys-249. An N6-acetyllysine; alternate modification is found at Lys-251. N6-succinyllysine; alternate is present on Lys-251. Asp-260 serves as a coordination point for Mn(2+). An NADP(+)-binding site is contributed by Lys-268. Residue Asp-283 participates in Mn(2+) binding. NADP(+) contacts are provided by residues 318–323 and Asn-336; that span reads GTVTRH. At Lys-353 the chain carries N6-acetyllysine; alternate. Lys-353 is modified (N6-succinyllysine; alternate). N6-acetyllysine occurs at positions 369, 382, and 411.

It belongs to the isocitrate and isopropylmalate dehydrogenases family. As to quaternary structure, homodimer. Mg(2+) serves as cofactor. Requires Mn(2+) as cofactor. Acetylation at Lys-382 dramatically reduces catalytic activity. Deacetylated by SIRT3.

Its subcellular location is the mitochondrion. It carries out the reaction D-threo-isocitrate + NADP(+) = 2-oxoglutarate + CO2 + NADPH. Functionally, plays a role in intermediary metabolism and energy production. It may tightly associate or interact with the pyruvate dehydrogenase complex. The protein is Isocitrate dehydrogenase [NADP], mitochondrial (IDH2) of Sus scrofa (Pig).